The sequence spans 256 residues: Proteasome subunit beta type-5 (256 aa).

Residues Cys-1–Gly-55 constitute a propeptide, removed in mature form. The active-site Nucleophile is Thr-56.

This sequence belongs to the peptidase T1B family. As to quaternary structure, the 26S proteasome consists of a 20S proteasome core and two 19S regulatory subunits. The 20S proteasome core is a barrel-shaped complex made of 28 subunits that are arranged in four stacked rings. The two outer rings are each formed by seven alpha subunits, and the two inner rings are formed by seven beta subunits. The proteolytic activity is exerted by three beta-subunits PSMB5, PSMB6 and PSMB7. Directly interacts with POMP. Interacts with ABCB1 and TAP1.

It localises to the cytoplasm. Its subcellular location is the nucleus. It carries out the reaction Cleavage of peptide bonds with very broad specificity.. Component of the 20S core proteasome complex involved in the proteolytic degradation of most intracellular proteins. This complex plays numerous essential roles within the cell by associating with different regulatory particles. Associated with two 19S regulatory particles, forms the 26S proteasome and thus participates in the ATP-dependent degradation of ubiquitinated proteins. The 26S proteasome plays a key role in the maintenance of protein homeostasis by removing misfolded or damaged proteins that could impair cellular functions, and by removing proteins whose functions are no longer required. Associated with the PA200 or PA28, the 20S proteasome mediates ubiquitin-independent protein degradation. This type of proteolysis is required in several pathways including spermatogenesis (20S-PA200 complex) or generation of a subset of MHC class I-presented antigenic peptides (20S-PA28 complex). Within the 20S core complex, PSMB5 displays a chymotrypsin-like activity. The polypeptide is Proteasome subunit beta type-5 (PSMB5) (Gallus gallus (Chicken)).